The chain runs to 209 residues: MENNMVMVHEIPFPPEIKTTKPLSLLGYGITDMEIHFLQVKFTAIGVYLDSDVVKHLQQWKGKKGNELAEDDDFFDALISAPVEKYLRIVVIKEIKGSQYGVQLESSVRDRLAAEDMYEEEEEAALEKIVEFLQSKYFKKDTLITFHFPATSPTAEIVVTLEGKEESKLKVENKNVVDMIKKWYLGGTSGVSPSTISSLADNLSAELSK.

This sequence belongs to the chalcone isomerase family. Component an active demethylxanthohumol (DMX) biosynthetic metabolon in glandular trichomes (lupulin glands) that encompasses a chalcone synthase (CHS) and a membrane-bound prenyltransferase. Interacts with CHS_H1 and PT1L. As to expression, mostly expressed in glandular trichomes (lupulin glands), and, to a lower extent, in cones, cones bracts, leaves, stems and roots.

Its subcellular location is the cytoplasm. The catalysed reaction is a chalcone = a flavanone.. It participates in secondary metabolite biosynthesis; flavonoid biosynthesis. Involved in the biosynthesis of prenylated phenolics natural products which contribute to the bitter taste of beer and display broad biological activities. Involved in anthocyanin biosynthesis. Polyketide binding proteins (PBP) which promotes the catalytic activities of CHS_H1 and PT1L and triggers demethylxanthohumol (DMX) production. In Humulus lupulus (European hop), this protein is Chalcone isomerase-like protein 2.